The sequence spans 258 residues: 14-3-3-like protein F (258 aa).

Belongs to the 14-3-3 family.

The protein is 14-3-3-like protein F of Nicotiana tabacum (Common tobacco).